The primary structure comprises 315 residues: Adenine deaminase (315 aa).

3 residues coordinate Zn(2+): histidine 14, histidine 16, and histidine 194. Glutamate 197 serves as the catalytic Proton donor. Aspartate 275 contributes to the Zn(2+) binding site. Residue aspartate 276 participates in substrate binding.

Belongs to the metallo-dependent hydrolases superfamily. Adenosine and AMP deaminases family. Adenine deaminase type 2 subfamily. Zn(2+) is required as a cofactor.

The enzyme catalyses adenine + H2O + H(+) = hypoxanthine + NH4(+). Functionally, catalyzes the hydrolytic deamination of adenine to hypoxanthine. Plays an important role in the purine salvage pathway and in nitrogen catabolism. This chain is Adenine deaminase, found in Pseudomonas putida (strain W619).